Consider the following 738-residue polypeptide: 1,4-alpha-glucan branching enzyme GlgB (738 aa).

Asp399 acts as the Nucleophile in catalysis. The Proton donor role is filled by Glu452.

The protein belongs to the glycosyl hydrolase 13 family. GlgB subfamily. As to quaternary structure, monomer.

The catalysed reaction is Transfers a segment of a (1-&gt;4)-alpha-D-glucan chain to a primary hydroxy group in a similar glucan chain.. Its pathway is glycan biosynthesis; glycogen biosynthesis. Its function is as follows. Catalyzes the formation of the alpha-1,6-glucosidic linkages in glycogen by scission of a 1,4-alpha-linked oligosaccharide from growing alpha-1,4-glucan chains and the subsequent attachment of the oligosaccharide to the alpha-1,6 position. This Chlamydia trachomatis serovar L2 (strain ATCC VR-902B / DSM 19102 / 434/Bu) protein is 1,4-alpha-glucan branching enzyme GlgB.